Consider the following 468-residue polypeptide: UDP-N-acetylmuramate--L-alanine ligase (468 aa).

112–118 contacts ATP; it reads GMHGKTT.

It belongs to the MurCDEF family.

Its subcellular location is the cytoplasm. The catalysed reaction is UDP-N-acetyl-alpha-D-muramate + L-alanine + ATP = UDP-N-acetyl-alpha-D-muramoyl-L-alanine + ADP + phosphate + H(+). The protein operates within cell wall biogenesis; peptidoglycan biosynthesis. Cell wall formation. The protein is UDP-N-acetylmuramate--L-alanine ligase of Koribacter versatilis (strain Ellin345).